The following is a 202-amino-acid chain: Probable nicotinate-nucleotide adenylyltransferase (202 aa).

This sequence belongs to the NadD family.

It catalyses the reaction nicotinate beta-D-ribonucleotide + ATP + H(+) = deamido-NAD(+) + diphosphate. The protein operates within cofactor biosynthesis; NAD(+) biosynthesis; deamido-NAD(+) from nicotinate D-ribonucleotide: step 1/1. Catalyzes the reversible adenylation of nicotinate mononucleotide (NaMN) to nicotinic acid adenine dinucleotide (NaAD). This is Probable nicotinate-nucleotide adenylyltransferase from Bacteroides thetaiotaomicron (strain ATCC 29148 / DSM 2079 / JCM 5827 / CCUG 10774 / NCTC 10582 / VPI-5482 / E50).